We begin with the raw amino-acid sequence, 584 residues long: Breast carcinoma-amplified sequence 1 (584 aa).

Disordered stretches follow at residues 1–29 (MGNQ…NASA), 59–280 (VATS…AAAI), and 297–377 (PNKA…GKLF). Composition is skewed to polar residues over residues 59–69 (VATSSPETTEI) and 112–128 (ADSS…SNKA). Phosphoserine is present on residues Ser-124 and Ser-192. Composition is skewed to basic and acidic residues over residues 186–226 (SKPK…KVDE), 238–252 (PAGK…KEGQ), and 300–311 (AETKKDPEDTGA). Phosphoserine is present on Ser-314. A compositionally biased stretch (polar residues) spans 314-354 (SPTTSADLKSDKANFTSQETQGAGKNSKGCNPSGHTQSVTT). Residues 357–366 (PAKEGTKEKS) show a composition bias toward basic and acidic residues. 2 positions are modified to phosphoserine: Ser-381 and Ser-399. Residues 415-584 (TVDLNEGDAA…VSIGPVGKSK (170 aa)) are disordered. Basic and acidic residues predominate over residues 428-439 (TEAKLKREESKP). Thr-480 is modified (phosphothreonine). The span at 494–506 (KGKEGSSKDKKSA) shows a compositional bias: basic and acidic residues. The span at 525 to 540 (CTEQATVDTNSLQNGD) shows a compositional bias: polar residues. Basic and acidic residues predominate over residues 541–550 (KLQKRPEKRQ). Ser-552 is subject to Phosphoserine. Residues 565-584 (MLDAQVQTDPVSIGPVGKSK) form an interacts with DYNLL1 and DYNLL2 region.

Homodimer. Interacts with DYNLL1 and DYNLL2. Highly expressed in the brain and, more specifically, in oligodendrocytes (at protein level). Expressed in the prostate, and at lower levels in testis, intestine and colon. Overexpressed in most breast cancer cell lines and down-regulated in some colorectal tumors.

The protein resides in the cytoplasm. In terms of biological role, required for myelination. The protein is Breast carcinoma-amplified sequence 1 (BCAS1) of Homo sapiens (Human).